The sequence spans 69 residues: DNA gyrase inhibitor YacG (69 aa).

4 residues coordinate Zn(2+): C7, C10, C26, and C30.

Belongs to the DNA gyrase inhibitor YacG family. In terms of assembly, interacts with GyrB. The cofactor is Zn(2+).

In terms of biological role, inhibits all the catalytic activities of DNA gyrase by preventing its interaction with DNA. Acts by binding directly to the C-terminal domain of GyrB, which probably disrupts DNA binding by the gyrase. In Shewanella putrefaciens (strain CN-32 / ATCC BAA-453), this protein is DNA gyrase inhibitor YacG.